A 221-amino-acid chain; its full sequence is Urease accessory protein UreG (221 aa).

19–26 (GPVGSGKT) is a binding site for GTP.

The protein belongs to the SIMIBI class G3E GTPase family. UreG subfamily. Homodimer. UreD, UreF and UreG form a complex that acts as a GTP-hydrolysis-dependent molecular chaperone, activating the urease apoprotein by helping to assemble the nickel containing metallocenter of UreC. The UreE protein probably delivers the nickel.

It localises to the cytoplasm. In terms of biological role, facilitates the functional incorporation of the urease nickel metallocenter. This process requires GTP hydrolysis, probably effectuated by UreG. This chain is Urease accessory protein UreG, found in Yersinia enterocolitica serotype O:8 / biotype 1B (strain NCTC 13174 / 8081).